We begin with the raw amino-acid sequence, 147 residues long: MVHFTAEEKATVASLWGKVNVEEAGGEVLGRLLVVYPWTQRFFDNFGNLSSSSAIMGNPKVKAHGKKVLTSFGDAVKHMDDLKGTFAHLSELHCDKLHVDPENFRLLGNVMVVVLASHFGKEFTPEVQAAWQKLVGGVANALAHKYH.

The 145-residue stretch at 3-147 (HFTAEEKATV…VANALAHKYH (145 aa)) folds into the Globin domain. Phosphoserine occurs at positions 14 and 51. Positions 64 and 93 each coordinate heme b.

The protein belongs to the globin family. Heterotetramer of two alpha chains and two epsilon chains in early embryonic hemoglobin Gower-2; two zeta chains and two epsilon chains in early embryonic hemoglobin Gower-1. Red blood cells.

Its function is as follows. The epsilon chain is a beta-type chain of early mammalian embryonic hemoglobin. In Bradypus tridactylus (Pale-throated three-toed sloth), this protein is Hemoglobin subunit epsilon (HBE1).